The sequence spans 352 residues: Large ribosomal subunit protein uL5m (352 aa).

The disordered stretch occupies residues 28–109 (STQTGAGAAA…HPIQSPPSSD (82 aa)). Residues 63–80 (EEDKKEFRPWKRAADRKA) show a composition bias toward basic and acidic residues.

Belongs to the universal ribosomal protein uL5 family. Component of the mitochondrial large ribosomal subunit (mt-LSU). Mature N.crassa 74S mitochondrial ribosomes consist of a small (37S) and a large (54S) subunit. The 37S small subunit contains a 16S ribosomal RNA (16S mt-rRNA) and 32 different proteins. The 54S large subunit contains a 23S rRNA (23S mt-rRNA) and 42 different proteins. Unlike bacterial L5, uL5m does not bind zinc.

The protein localises to the mitochondrion. In terms of biological role, component of the mitochondrial ribosome (mitoribosome), a dedicated translation machinery responsible for the synthesis of mitochondrial genome-encoded proteins, including at least some of the essential transmembrane subunits of the mitochondrial respiratory chain. The mitoribosomes are attached to the mitochondrial inner membrane and translation products are cotranslationally integrated into the membrane. In Neurospora crassa (strain ATCC 24698 / 74-OR23-1A / CBS 708.71 / DSM 1257 / FGSC 987), this protein is Large ribosomal subunit protein uL5m (mrpl7).